The following is a 193-amino-acid chain: V-type ATP synthase subunit E (193 aa).

This sequence belongs to the V-ATPase E subunit family.

Produces ATP from ADP in the presence of a proton gradient across the membrane. In Anaeromyxobacter sp. (strain Fw109-5), this protein is V-type ATP synthase subunit E.